We begin with the raw amino-acid sequence, 507 residues long: Beta-glucosidase 13 (507 aa).

The N-terminal stretch at 1–22 is a signal peptide; sequence MRTKYFSLLVFIIVLASNEVIA. Position 50 (Gln50) interacts with a beta-D-glucoside. Residue Asn81 is glycosylated (N-linked (GlcNAc...) asparagine). Residues His154 and 199–200 each bind a beta-D-glucoside; that span reads NE. Glu200 (proton donor) is an active-site residue. Cysteines 219 and 227 form a disulfide. Asn226 carries an N-linked (GlcNAc...) asparagine glycan. A beta-D-glucoside is bound at residue Tyr344. Asn358 is a glycosylation site (N-linked (GlcNAc...) asparagine). A beta-D-glucoside contacts are provided by residues Glu414, Trp459, 466–467, and Phe475; that span reads EW. The active-site Nucleophile is Glu414.

This sequence belongs to the glycosyl hydrolase 1 family.

The enzyme catalyses Hydrolysis of terminal, non-reducing beta-D-glucosyl residues with release of beta-D-glucose.. This Arabidopsis thaliana (Mouse-ear cress) protein is Beta-glucosidase 13.